Consider the following 335-residue polypeptide: Agamous-like MADS-box protein AGL104 (335 aa).

The MADS-box domain maps to Met-1–Thr-61. Residues Ser-124–Glu-151 adopt a coiled-coil conformation. A disordered region spans residues Met-302–Gln-335. Residues Gln-317–Thr-327 show a composition bias toward basic and acidic residues.

In terms of assembly, forms heterodimers with AGL30 and AGL65. Expressed in pollen.

The protein resides in the nucleus. Functionally, probable transcription factor that forms heterodimers with the MADS-box proteins AGL30 and AGL65 and is involved in the regulation of pollen maturation at the late stages of pollen development and pollen tube growth. The protein is Agamous-like MADS-box protein AGL104 of Arabidopsis thaliana (Mouse-ear cress).